The following is a 961-amino-acid chain: Outer capsid protein VP2 (961 aa).

The protein belongs to the orbivirus VP2 family.

The protein resides in the virion. In terms of biological role, the VP2 protein is one of the two proteins (with VP5) which constitute the virus particle outer capsid. It is the major target of the host immunogenic response. Responsible for viral attachment to target host cell, probably by binding to sialic acid. This attachment induces virion internalization predominantly through clathrin-dependent endocytosis. This Bluetongue virus 1 (isolate South Africa vaccine) (BTV 1) protein is Outer capsid protein VP2 (Segment-2).